A 252-amino-acid chain; its full sequence is Octanoyltransferase (252 aa).

A compositionally biased stretch (low complexity) spans 1 to 21 (MPSAPAAPAAPAAPDAAASVA). Residues 1–22 (MPSAPAAPAAPAAPDAAASVAP) are disordered. A BPL/LPL catalytic domain is found at 56–237 (PDTDDEIWVV…RLIAHLDGAT (182 aa)). Substrate is bound by residues 96 to 103 (RGGQITYH), 168 to 170 (ALG), and 181 to 183 (GLS). The Acyl-thioester intermediate role is filled by Cys199.

It belongs to the LipB family.

The protein resides in the cytoplasm. The enzyme catalyses octanoyl-[ACP] + L-lysyl-[protein] = N(6)-octanoyl-L-lysyl-[protein] + holo-[ACP] + H(+). It participates in protein modification; protein lipoylation via endogenous pathway; protein N(6)-(lipoyl)lysine from octanoyl-[acyl-carrier-protein]: step 1/2. In terms of biological role, catalyzes the transfer of endogenously produced octanoic acid from octanoyl-acyl-carrier-protein onto the lipoyl domains of lipoate-dependent enzymes. Lipoyl-ACP can also act as a substrate although octanoyl-ACP is likely to be the physiological substrate. This chain is Octanoyltransferase, found in Burkholderia pseudomallei (strain 668).